A 221-amino-acid chain; its full sequence is High frequency lysogenization protein HflD homolog (221 aa).

The protein belongs to the HflD family.

The protein localises to the cytoplasm. It localises to the cell inner membrane. In Acidithiobacillus ferrooxidans (strain ATCC 23270 / DSM 14882 / CIP 104768 / NCIMB 8455) (Ferrobacillus ferrooxidans (strain ATCC 23270)), this protein is High frequency lysogenization protein HflD homolog.